The primary structure comprises 136 residues: Ribosome-binding factor A (136 aa).

The protein belongs to the RbfA family. In terms of assembly, monomer. Binds 30S ribosomal subunits, but not 50S ribosomal subunits or 70S ribosomes.

The protein localises to the cytoplasm. One of several proteins that assist in the late maturation steps of the functional core of the 30S ribosomal subunit. Associates with free 30S ribosomal subunits (but not with 30S subunits that are part of 70S ribosomes or polysomes). Required for efficient processing of 16S rRNA. May interact with the 5'-terminal helix region of 16S rRNA. The chain is Ribosome-binding factor A from Rhizobium etli (strain ATCC 51251 / DSM 11541 / JCM 21823 / NBRC 15573 / CFN 42).